We begin with the raw amino-acid sequence, 195 residues long: dCTP deaminase (195 aa).

DCTP contacts are provided by residues 109–114 (RSSLAR), D127, 135–137 (TLE), Y170, K177, and Q181. Residue E137 is the Proton donor/acceptor of the active site.

It belongs to the dCTP deaminase family. As to quaternary structure, homotrimer.

It carries out the reaction dCTP + H2O + H(+) = dUTP + NH4(+). The protein operates within pyrimidine metabolism; dUMP biosynthesis; dUMP from dCTP (dUTP route): step 1/2. Catalyzes the deamination of dCTP to dUTP. This is dCTP deaminase from Rhodospirillum rubrum (strain ATCC 11170 / ATH 1.1.1 / DSM 467 / LMG 4362 / NCIMB 8255 / S1).